A 319-amino-acid polypeptide reads, in one-letter code: Protoheme IX farnesyltransferase (319 aa).

A run of 9 helical transmembrane segments spans residues 34 to 54, 55 to 75, 95 to 115, 119 to 139, 155 to 175, 182 to 202, 221 to 241, 244 to 264, and 291 to 311; these read VMSLVVFTAFAGLVLAPGHIN, PVLGLIAILCIAVGAGASGAL, IPAGRVAPSEALAFGLVLSGF, ILGLAVNWLSAAILAFTIFFY, IVIGGAAGAFPPVIGWACVTG, VVLFLIIFLWTPAHFWALALF, VPTTKNQIVAYAVLTAIIGVV, FMGFASLGYGVVATVLGVIFV, and IFYLFAIFSALLIDRLVAVLM.

It belongs to the UbiA prenyltransferase family. Protoheme IX farnesyltransferase subfamily.

It is found in the cell inner membrane. It carries out the reaction heme b + (2E,6E)-farnesyl diphosphate + H2O = Fe(II)-heme o + diphosphate. Its pathway is porphyrin-containing compound metabolism; heme O biosynthesis; heme O from protoheme: step 1/1. Converts heme B (protoheme IX) to heme O by substitution of the vinyl group on carbon 2 of heme B porphyrin ring with a hydroxyethyl farnesyl side group. The polypeptide is Protoheme IX farnesyltransferase (Rhizobium rhizogenes (strain K84 / ATCC BAA-868) (Agrobacterium radiobacter)).